Reading from the N-terminus, the 355-residue chain is MSAVLARPDPTDAAARIRTLAREAGFQRCGITGIELGEDEAHLRSWLAEGLYGTMHWMAQHGDKRSRPQELVPGTLRVLSVGMDYGRKDDTEAWDTLHDGRRAYVARYALGRDYHKLMRNRLQKLAERIQAEVGPFGYRVFVDSAPVLERALARNAGLGWIGKHTCLIDRGGGSWFFLGEIYLDLPLPIDTPATAHCGTCTRCIDICPTQAIIAPHRLDARRCIAYLTIEHDGAIPEDMRKPIGNRIFGCDDCQLICPWNKFAQRTDEPDFRARNDLDVATLPQLFAWDEAEFLRRTEGSPIRRSGHERWLRNIAVGLGNAPGSEDVLAALESRRHDDSALVREHVGWALAQHGL.

Catalysis depends on Asp143, which acts as the Proton donor. One can recognise a 4Fe-4S ferredoxin-type domain in the interval 185-217 (LPLPIDTPATAHCGTCTRCIDICPTQAIIAPHR). [4Fe-4S] cluster contacts are provided by Cys197, Cys200, Cys203, Cys207, Cys223, Cys250, Cys253, and Cys257.

This sequence belongs to the QueG family. Monomer. The cofactor is cob(II)alamin. It depends on [4Fe-4S] cluster as a cofactor.

It localises to the cytoplasm. It catalyses the reaction epoxyqueuosine(34) in tRNA + AH2 = queuosine(34) in tRNA + A + H2O. It functions in the pathway tRNA modification; tRNA-queuosine biosynthesis. Its function is as follows. Catalyzes the conversion of epoxyqueuosine (oQ) to queuosine (Q), which is a hypermodified base found in the wobble positions of tRNA(Asp), tRNA(Asn), tRNA(His) and tRNA(Tyr). In Xanthomonas campestris pv. campestris (strain ATCC 33913 / DSM 3586 / NCPPB 528 / LMG 568 / P 25), this protein is Epoxyqueuosine reductase.